Reading from the N-terminus, the 344-residue chain is DNA integrity scanning protein DisA (344 aa).

One can recognise a DAC domain in the interval 1-133 (MALLAPGTPI…GRRYLIERPE (133 aa)). ATP contacts are provided by residues G61 and 92-96 (TRHRT).

Belongs to the DisA family. As to quaternary structure, homooctamer. Mg(2+) is required as a cofactor.

It catalyses the reaction 2 ATP = 3',3'-c-di-AMP + 2 diphosphate. In terms of biological role, participates in a DNA-damage check-point. DisA forms globular foci that rapidly scan along the chromosomes searching for lesions. Also has diadenylate cyclase activity, catalyzing the condensation of 2 ATP molecules into cyclic di-AMP (c-di-AMP). c-di-AMP likely acts as a signaling molecule that may couple DNA integrity with a cellular process. The protein is DNA integrity scanning protein DisA of Cutibacterium acnes (strain DSM 16379 / KPA171202) (Propionibacterium acnes).